Reading from the N-terminus, the 101-residue chain is Putative pterin-4-alpha-carbinolamine dehydratase (101 aa).

It belongs to the pterin-4-alpha-carbinolamine dehydratase family.

It catalyses the reaction (4aS,6R)-4a-hydroxy-L-erythro-5,6,7,8-tetrahydrobiopterin = (6R)-L-erythro-6,7-dihydrobiopterin + H2O. This chain is Putative pterin-4-alpha-carbinolamine dehydratase, found in Streptomyces coelicolor (strain ATCC BAA-471 / A3(2) / M145).